Here is a 408-residue protein sequence, read N- to C-terminus: Arylacetamide deacetylase-like 3 (408 aa).

Transmembrane regions (helical) follow at residues 2 to 22, 46 to 66, and 109 to 129; these read VVLA…GSLL, ILSC…KLGL, and SSIP…IGSL. The Involved in the stabilization of the negatively charged intermediate by the formation of the oxyanion hole motif lies at 120 to 122; the sequence is HGG. Residue S194 is part of the active site. N321 carries an N-linked (GlcNAc...) asparagine glycan. Residues D348 and H378 contribute to the active site.

This sequence belongs to the 'GDXG' lipolytic enzyme family.

The protein resides in the membrane. The chain is Arylacetamide deacetylase-like 3 (Aadacl3) from Mus musculus (Mouse).